A 783-amino-acid chain; its full sequence is Mitochondrial intermediate peptidase (783 aa).

A mitochondrion-targeting transit peptide spans 1-33 (MKAGIPLSRCTQRIPLLVARQVSRNITTTTTKF). Zn(2+) is bound at residue His-565. Glu-566 is an active-site residue. Zn(2+) is bound by residues His-569 and His-572.

The protein belongs to the peptidase M3 family. Zn(2+) is required as a cofactor.

It localises to the mitochondrion matrix. It catalyses the reaction Release of an N-terminal octapeptide as second stage of processing of some proteins imported into the mitochondrion.. Functionally, cleaves proteins, imported into the mitochondrion, to their mature size. While most mitochondrial precursor proteins are processed to the mature form in one step by mitochondrial processing peptidase (MPP), the sequential cleavage by MIP of an octapeptide after initial processing by MPP is a required step for a subgroup of nuclear-encoded precursor proteins destined for the matrix or the inner membrane. In Candida albicans (strain SC5314 / ATCC MYA-2876) (Yeast), this protein is Mitochondrial intermediate peptidase (OCT1).